The following is a 389-amino-acid chain: Succinate--CoA ligase [ADP-forming] subunit beta (389 aa).

The ATP-grasp domain maps to 9–244 (KEILRKFGVA…LDEEDPAEVE (236 aa)). Residues lysine 46, 53–55 (GRG), glutamate 99, alanine 102, and glutamate 107 contribute to the ATP site. Positions 199 and 213 each coordinate Mg(2+). Residues asparagine 264 and 321–323 (GIM) contribute to the substrate site.

The protein belongs to the succinate/malate CoA ligase beta subunit family. In terms of assembly, heterotetramer of two alpha and two beta subunits. Mg(2+) serves as cofactor.

The catalysed reaction is succinate + ATP + CoA = succinyl-CoA + ADP + phosphate. It carries out the reaction GTP + succinate + CoA = succinyl-CoA + GDP + phosphate. Its pathway is carbohydrate metabolism; tricarboxylic acid cycle; succinate from succinyl-CoA (ligase route): step 1/1. Succinyl-CoA synthetase functions in the citric acid cycle (TCA), coupling the hydrolysis of succinyl-CoA to the synthesis of either ATP or GTP and thus represents the only step of substrate-level phosphorylation in the TCA. The beta subunit provides nucleotide specificity of the enzyme and binds the substrate succinate, while the binding sites for coenzyme A and phosphate are found in the alpha subunit. This Paraburkholderia phytofirmans (strain DSM 17436 / LMG 22146 / PsJN) (Burkholderia phytofirmans) protein is Succinate--CoA ligase [ADP-forming] subunit beta.